Consider the following 436-residue polypeptide: Testican-3 (436 aa).

The signal sequence occupies residues 1–21 (MLKVSAVLCVCAAAWCSQSLA). Disulfide bonds link Cys-90/Cys-101, Cys-95/Cys-111, Cys-139/Cys-169, Cys-142/Cys-162, Cys-151/Cys-183, Cys-317/Cys-341, Cys-352/Cys-359, and Cys-361/Cys-380. The region spanning 133 to 185 (GPILSTCKQCPVVYPSPVCGSDGHTYSFQCKLEYQACVLGKQISVKCEGHCPC) is the Kazal-like domain. One can recognise a Thyroglobulin type-1 domain in the interval 314 to 380 (DPPCQTELSN…GSRINGVADC (67 aa)). Residues Ser-387 and Ser-392 are each glycosylated (O-linked (Xyl...) (glycosaminoglycan) serine). A disordered region spans residues 393–436 (GDFHEWTDDEDDEDDIMNDEDEIEDDDEDEGDDDDGGDDHDVYI). The span at 399–430 (TDDEDDEDDIMNDEDEIEDDDEDEGDDDDGGD) shows a compositional bias: acidic residues.

In terms of processing, contains chondroitin sulfate and heparan sulfate O-linked oligosaccharides. In terms of tissue distribution, expressed in brain.

Its subcellular location is the secreted. The protein resides in the extracellular space. It localises to the extracellular matrix. In terms of biological role, may participate in diverse steps of neurogenesis. Inhibits the processing of pro-matrix metalloproteinase 2 (MMP-2) by MT1-MMP and MT3-MMP. May interfere with tumor invasion. The polypeptide is Testican-3 (SPOCK3) (Homo sapiens (Human)).